Reading from the N-terminus, the 98-residue chain is Class II hydrophobin 1 (98 aa).

The first 16 residues, 1 to 16 (MQFFTTVVLFAAAAMA), serve as a signal peptide directing secretion. Disulfide bonds link cysteine 29/cysteine 79, cysteine 39/cysteine 70, cysteine 40/cysteine 52, and cysteine 80/cysteine 92.

It belongs to the cerato-ulmin hydrophobin family. In terms of assembly, homodimer. Homodimers further self-assemble to form highly ordered films at water-air interfaces through intermolecular interactions. As to expression, expressed in mycelium, conidiating mycelium and aerial hyphae.

Its subcellular location is the secreted. It is found in the cell wall. Aerial growth, conidiation, and dispersal of filamentous fungi in the environment rely upon a capability of their secreting small amphipathic proteins called hydrophobins (HPBs) with low sequence identity. Class I can self-assemble into an outermost layer of rodlet bundles on aerial cell surfaces, conferring cellular hydrophobicity that supports fungal growth, development and dispersal; whereas Class II form highly ordered films at water-air interfaces through intermolecular interactions but contribute nothing to the rodlet structure. Hyd1 is a class II hydrophobin that plays probably a role during conidiophore development and in intraspecific signaling or hyphal fusion. Hyd1 and Hyd3 are jointly required for conidial hydrophobicity and dispersal, but seem not to be involved in mycelia hydrophobicity. Inhibits conidial germination in environments not suitable for mycelial growth. Not necessary for root adhesion and colonization. This chain is Class II hydrophobin 1, found in Bionectria ochroleuca (Gliocladium roseum).